A 298-amino-acid polypeptide reads, in one-letter code: ATP synthase gamma chain (298 aa).

This sequence belongs to the ATPase gamma chain family. F-type ATPases have 2 components, CF(1) - the catalytic core - and CF(0) - the membrane proton channel. CF(1) has five subunits: alpha(3), beta(3), gamma(1), delta(1), epsilon(1). CF(0) has three main subunits: a, b and c.

The protein localises to the cell inner membrane. In terms of biological role, produces ATP from ADP in the presence of a proton gradient across the membrane. The gamma chain is believed to be important in regulating ATPase activity and the flow of protons through the CF(0) complex. This chain is ATP synthase gamma chain, found in Francisella tularensis subsp. tularensis (strain WY96-3418).